Here is a 119-residue protein sequence, read N- to C-terminus: Large ribosomal subunit protein bL20 (119 aa).

This sequence belongs to the bacterial ribosomal protein bL20 family.

Functionally, binds directly to 23S ribosomal RNA and is necessary for the in vitro assembly process of the 50S ribosomal subunit. It is not involved in the protein synthesizing functions of that subunit. In Bacillus licheniformis (strain ATCC 14580 / DSM 13 / JCM 2505 / CCUG 7422 / NBRC 12200 / NCIMB 9375 / NCTC 10341 / NRRL NRS-1264 / Gibson 46), this protein is Large ribosomal subunit protein bL20.